A 279-amino-acid chain; its full sequence is Tryptophan 2,3-dioxygenase (279 aa).

Substrate is bound by residues 48–52 (FIIQH), Tyr110, and Arg114. His237 is a binding site for heme. A substrate-binding site is contributed by Thr251.

Belongs to the tryptophan 2,3-dioxygenase family. In terms of assembly, homotetramer. Heme is required as a cofactor.

It carries out the reaction L-tryptophan + O2 = N-formyl-L-kynurenine. The protein operates within amino-acid degradation; L-tryptophan degradation via kynurenine pathway; L-kynurenine from L-tryptophan: step 1/2. Functionally, heme-dependent dioxygenase that catalyzes the oxidative cleavage of the L-tryptophan (L-Trp) pyrrole ring and converts L-tryptophan to N-formyl-L-kynurenine. Catalyzes the oxidative cleavage of the indole moiety. This chain is Tryptophan 2,3-dioxygenase, found in Ruegeria sp. (strain TM1040) (Silicibacter sp.).